The sequence spans 132 residues: Small ribosomal subunit protein eS12 (132 aa).

Position 2 is an N-acetylalanine (alanine 2). At lysine 129 the chain carries N6-succinyllysine.

It belongs to the eukaryotic ribosomal protein eS12 family. Part of the small subunit (SSU) processome, composed of more than 70 proteins and the RNA chaperone small nucleolar RNA (snoRNA) U3. Subunit of the 40S ribosomal complex.

It localises to the nucleus. The protein localises to the nucleolus. Functionally, part of the small subunit (SSU) processome, first precursor of the small eukaryotic ribosomal subunit. During the assembly of the SSU processome in the nucleolus, many ribosome biogenesis factors, an RNA chaperone and ribosomal proteins associate with the nascent pre-rRNA and work in concert to generate RNA folding, modifications, rearrangements and cleavage as well as targeted degradation of pre-ribosomal RNA by the RNA exosome. Subunit of the 40S ribosomal complex. The sequence is that of Small ribosomal subunit protein eS12 (Rps12) from Rattus norvegicus (Rat).